We begin with the raw amino-acid sequence, 232 residues long: Flagellar L-ring protein (232 aa).

An N-terminal signal peptide occupies residues 1–21 (MQKNAAHTYAISSLLVLSLTG). Cysteine 22 is lipidated: N-palmitoyl cysteine. Cysteine 22 carries S-diacylglycerol cysteine lipidation.

Belongs to the FlgH family. The basal body constitutes a major portion of the flagellar organelle and consists of four rings (L,P,S, and M) mounted on a central rod.

The protein resides in the cell outer membrane. Its subcellular location is the bacterial flagellum basal body. Functionally, assembles around the rod to form the L-ring and probably protects the motor/basal body from shearing forces during rotation. This chain is Flagellar L-ring protein, found in Escherichia coli O7:K1 (strain IAI39 / ExPEC).